The sequence spans 365 residues: DNA replication and repair protein RecF (365 aa).

ATP is bound at residue 30-37 (GLNGSGKT).

Belongs to the RecF family.

Its subcellular location is the cytoplasm. The RecF protein is involved in DNA metabolism; it is required for DNA replication and normal SOS inducibility. RecF binds preferentially to single-stranded, linear DNA. It also seems to bind ATP. This Cellvibrio japonicus (strain Ueda107) (Pseudomonas fluorescens subsp. cellulosa) protein is DNA replication and repair protein RecF.